An 805-amino-acid chain; its full sequence is Centrosomal protein of 85 kDa-like (805 aa).

Disordered stretches follow at residues 1 to 27 (MWGRFLAPEASGRDSPGGARSFPAGPD) and 50 to 89 (RNNHIRRHSIASDSGDTGIGTSCSDSVEDHSTSSGTLSFK). Ser15 carries the phosphoserine modification. Residues 60-74 (ASDSGDTGIGTSCSD) show a composition bias toward polar residues. Ser207 carries the phosphoserine modification. The stretch at 439 to 682 (SQQGEFEQKL…LENQRQTDET (244 aa)) forms a coiled coil.

The protein belongs to the CEP85 family. In terms of tissue distribution, isoform 1 and isoform 4 are expressed in spleen, lymph, thymus, tonsil and peripheral blood leukocytes, with isoform 1 expressed at higher levels. Isoform 4 is detected in K-562 leukemia cells and in the blood of precursor T lymphoblastic lymphoma (T-ALL) patients.

The protein localises to the cytoplasm. Its subcellular location is the cytoskeleton. It is found in the microtubule organizing center. It localises to the centrosome. Plays an essential role in neuronal cell migration. The polypeptide is Centrosomal protein of 85 kDa-like (Homo sapiens (Human)).